A 701-amino-acid chain; its full sequence is MNPVAPTRKVKPPRNRPSDRRQARKKARIKTKGIYLRAIKDAFVKLNPKSAIKNPVMFVVWVATLVTLAVTINPDLFGPNQQKNPQLFNGLLTGILFFTVWFANFAEAVAEGRGKAQADTLRSTKSEAIAKQLSPDGTIAEVPSTNLKQGDTVYVVAGDIIPADGEVIMGVASVDESAITGESAPVLKESGSDVASSVTGGTRIISDELIVRVTSDPGKGFIDRMIALVEGAERSKTPNEVALTVLLAVLSLVFLFVIATLPAFAYYADTPVNVPTLIALLVALIPTTIGGLLSAIGIAGMDRVAQFNVIATSGRAVEVCGDINTLVLDKTGTITLGNRLAEEFIPINGYSVEQLASVAWAASVFDDTPEGKSIVRLAEKLGIRYDLDPNLAQAVEFSAKTRMSGTNLPGGREARKGAVGAIQGFVRSRNGQTIPELDAAYERVSQQGGTPLAVCLDNEIYGVIYLKDIVKSGIRERFDQLRRMGVRTIMLTGDNHITASVIAQEAGVDDFIAEATPEDKISVIQREQAQGKLVAMTGDGTNDAPALAQANVGVAMNTGTQAAKEAANMVDLDSDPTKLIDIVSIGKQLLITRGALTTFSIANDIAKYFAIIPVIFAAANLQSLNIMNLTSTNSAVLSALIYNALIIPALIPLALKGVQFRPLTANQLLQRNILIYGLGGVIAPFIAIKLIDILITLVGLA.

A disordered region spans residues 1-26 (MNPVAPTRKVKPPRNRPSDRRQARKK). 4 helical membrane-spanning segments follow: residues 57–77 (MFVV…PDLF), 90–110 (GLLT…EAVA), 241–261 (VALT…IATL), and 278–298 (IALL…AIGI). Asp-329 serves as the catalytic 4-aspartylphosphate intermediate. ATP-binding positions include Asp-366, Glu-370, 397-404 (FSAKTRMS), and Lys-416. Residues Asp-539 and Asp-543 each contribute to the Mg(2+) site. The next 3 membrane-spanning stretches (helical) occupy residues 599-619 (FSIA…FAAA), 635-655 (AVLS…PLAL), and 681-701 (VIAP…VGLA).

It belongs to the cation transport ATPase (P-type) (TC 3.A.3) family. Type IA subfamily. As to quaternary structure, the system is composed of three essential subunits: KdpA, KdpB and KdpC.

The protein resides in the cell inner membrane. The catalysed reaction is K(+)(out) + ATP + H2O = K(+)(in) + ADP + phosphate + H(+). In terms of biological role, part of the high-affinity ATP-driven potassium transport (or Kdp) system, which catalyzes the hydrolysis of ATP coupled with the electrogenic transport of potassium into the cytoplasm. This subunit is responsible for energy coupling to the transport system and for the release of the potassium ions to the cytoplasm. This chain is Potassium-transporting ATPase ATP-binding subunit 1, found in Nostoc sp. (strain PCC 7120 / SAG 25.82 / UTEX 2576).